Reading from the N-terminus, the 664-residue chain is UvrABC system protein B (664 aa).

Positions Glu23–Gly412 constitute a Helicase ATP-binding domain. ATP is bound at residue Gly36–Thr43. Residues Tyr89–Ile112 carry the Beta-hairpin motif. A Helicase C-terminal domain is found at Asp429 to Leu588. Residues Glu622–Glu657 form the UVR domain.

The protein belongs to the UvrB family. Forms a heterotetramer with UvrA during the search for lesions. Interacts with UvrC in an incision complex.

The protein resides in the cytoplasm. The UvrABC repair system catalyzes the recognition and processing of DNA lesions. A damage recognition complex composed of 2 UvrA and 2 UvrB subunits scans DNA for abnormalities. Upon binding of the UvrA(2)B(2) complex to a putative damaged site, the DNA wraps around one UvrB monomer. DNA wrap is dependent on ATP binding by UvrB and probably causes local melting of the DNA helix, facilitating insertion of UvrB beta-hairpin between the DNA strands. Then UvrB probes one DNA strand for the presence of a lesion. If a lesion is found the UvrA subunits dissociate and the UvrB-DNA preincision complex is formed. This complex is subsequently bound by UvrC and the second UvrB is released. If no lesion is found, the DNA wraps around the other UvrB subunit that will check the other stand for damage. The protein is UvrABC system protein B of Thermotoga maritima (strain ATCC 43589 / DSM 3109 / JCM 10099 / NBRC 100826 / MSB8).